Reading from the N-terminus, the 285-residue chain is Mediator of RNA polymerase II transcription subunit 4 (285 aa).

A compositionally biased stretch (low complexity) spans 1 to 13 (MSTPGPVPSSTSV). The interval 1–25 (MSTPGPVPSSTSVATLPFSAQDKTQ) is disordered. Residues 31–115 (ELQSVGIYQD…TREILETLNT (85 aa)) are a coiled coil. Residues 206 to 285 (DNVNNDNNTS…DLDLFNPDEF (80 aa)) are disordered. 2 stretches are compositionally biased toward basic and acidic residues: residues 216 to 250 (KIDE…RRGS) and 257 to 267 (GKEDSETKSEE). Acidic residues predominate over residues 268–285 (NPDLELDLDLDLFNPDEF).

The protein belongs to the Mediator complex subunit 4 family. In terms of assembly, component of the Mediator complex.

Its subcellular location is the nucleus. Functionally, component of the Mediator complex, a coactivator involved in the regulated transcription of nearly all RNA polymerase II-dependent genes. Mediator functions as a bridge to convey information from gene-specific regulatory proteins to the basal RNA polymerase II transcription machinery. Mediator is recruited to promoters by direct interactions with regulatory proteins and serves as a scaffold for the assembly of a functional preinitiation complex with RNA polymerase II and the general transcription factors. This is Mediator of RNA polymerase II transcription subunit 4 (MED4) from Kluyveromyces lactis (strain ATCC 8585 / CBS 2359 / DSM 70799 / NBRC 1267 / NRRL Y-1140 / WM37) (Yeast).